The following is a 417-amino-acid chain: Serine hydroxymethyltransferase (417 aa).

(6S)-5,6,7,8-tetrahydrofolate is bound by residues leucine 121 and 125-127; that span reads GHL. Lysine 229 is subject to N6-(pyridoxal phosphate)lysine. 355–357 is a (6S)-5,6,7,8-tetrahydrofolate binding site; the sequence is SPF.

The protein belongs to the SHMT family. In terms of assembly, homodimer. Requires pyridoxal 5'-phosphate as cofactor.

Its subcellular location is the cytoplasm. It catalyses the reaction (6R)-5,10-methylene-5,6,7,8-tetrahydrofolate + glycine + H2O = (6S)-5,6,7,8-tetrahydrofolate + L-serine. The protein operates within one-carbon metabolism; tetrahydrofolate interconversion. Its pathway is amino-acid biosynthesis; glycine biosynthesis; glycine from L-serine: step 1/1. Catalyzes the reversible interconversion of serine and glycine with tetrahydrofolate (THF) serving as the one-carbon carrier. This reaction serves as the major source of one-carbon groups required for the biosynthesis of purines, thymidylate, methionine, and other important biomolecules. Also exhibits THF-independent aldolase activity toward beta-hydroxyamino acids, producing glycine and aldehydes, via a retro-aldol mechanism. The sequence is that of Serine hydroxymethyltransferase from Buchnera aphidicola subsp. Acyrthosiphon pisum (strain 5A).